Reading from the N-terminus, the 109-residue chain is Small ribosomal subunit protein uS17A (109 aa).

It belongs to the universal ribosomal protein uS17 family. In terms of assembly, part of the 30S ribosomal subunit.

Its function is as follows. One of the primary rRNA binding proteins, it binds specifically to the 5'-end of 16S ribosomal RNA. The sequence is that of Small ribosomal subunit protein uS17A from Methanosarcina acetivorans (strain ATCC 35395 / DSM 2834 / JCM 12185 / C2A).